The following is a 226-amino-acid chain: Protein transport protein sec20 (226 aa).

The Cytoplasmic portion of the chain corresponds to 1–189 (MADVLNALEE…IKSLKLSDRS (189 aa)). Residues 53 to 75 (LRYEKAVQEYIRLNRRYRNKIAS) are a coiled coil. Position 97 is a phosphoserine (Ser-97). Residues 190–210 (DYFLVVSGFGFFIFVVVYLLF) traverse the membrane as a helical; Anchor for type IV membrane protein segment. Over 211–226 (KRIVWPILSMFLWFLR) the chain is Lumenal.

It belongs to the SEC20 family. As to quaternary structure, component of a SNARE complex consisting of ufe1, sec20, sec22 and use1. Interacts with tip20 through its cytoplasmic domain.

It localises to the endoplasmic reticulum membrane. Functionally, SNARE required for targeting and fusion of Golgi-derived retrograde transport vesicles with the ER. The chain is Protein transport protein sec20 from Schizosaccharomyces pombe (strain 972 / ATCC 24843) (Fission yeast).